Here is a 331-residue protein sequence, read N- to C-terminus: Pyruvate synthase subunit PorB (331 aa).

[4Fe-4S] cluster contacts are provided by Cys21, Cys24, Cys59, and Cys222.

As to quaternary structure, heterotetramer of one alpha, one beta, one delta and one gamma chain. The cofactor is [4Fe-4S] cluster.

It catalyses the reaction 2 oxidized [2Fe-2S]-[ferredoxin] + pyruvate + CoA = 2 reduced [2Fe-2S]-[ferredoxin] + acetyl-CoA + CO2 + H(+). In Pyrococcus horikoshii (strain ATCC 700860 / DSM 12428 / JCM 9974 / NBRC 100139 / OT-3), this protein is Pyruvate synthase subunit PorB (porB).